Consider the following 924-residue polypeptide: Lipoxygenase 7, chloroplastic (924 aa).

A chloroplast-targeting transit peptide spans 1 to 61 (MLRPQLNPSS…GQGSSRVVVV (61 aa)). In terms of domain architecture, PLAT spans 88–218 (AVATIKVTVG…VGDEGTPSKR (131 aa)). Residues 225–924 (TYLPGQTPAG…GMGIPNSTSI (700 aa)) enclose the Lipoxygenase domain. The segment at 231-315 (TPAGLRSYRK…PKSETRKGNV (85 aa)) is disordered. Composition is skewed to basic and acidic residues over residues 239-262 (RKNDLQQKRGDGTGEREADDRVYD) and 302-315 (SKKDPKSETRKGNV). Residues His581, His586, His773, Asn777, and Ile924 each coordinate Fe cation.

It belongs to the lipoxygenase family. It depends on Fe cation as a cofactor.

It localises to the plastid. Its subcellular location is the chloroplast. It carries out the reaction (9Z,12Z)-octadecadienoate + O2 = (13S)-hydroperoxy-(9Z,11E)-octadecadienoate. The catalysed reaction is (9Z,12Z,15Z)-octadecatrienoate + O2 = (13S)-hydroperoxy-(9Z,11E,15Z)-octadecatrienoate. It functions in the pathway lipid metabolism; oxylipin biosynthesis. Its function is as follows. Plant lipoxygenase may be involved in a number of diverse aspects of plant physiology including growth and development, pest resistance, and senescence or responses to wounding. This lipoxygenase introduces molecular oxygen exclusively into the C-13 position of linoleic and linolenic acids. The sequence is that of Lipoxygenase 7, chloroplastic (CM-LOX1) from Oryza sativa subsp. japonica (Rice).